A 367-amino-acid polypeptide reads, in one-letter code: Glycerol dehydrogenase (367 aa).

The NAD(+) site is built by Asp37, Gly94, Lys95, Thr116, and Ser119. Asp121 is a glycerol binding site. NAD(+) contacts are provided by Ser125, Leu127, and Tyr131. 3 residues coordinate Zn(2+): Asp171, His254, and His271. His254 contacts glycerol.

This sequence belongs to the iron-containing alcohol dehydrogenase family. Zn(2+) is required as a cofactor.

The catalysed reaction is glycerol + NAD(+) = dihydroxyacetone + NADH + H(+). The protein operates within polyol metabolism; glycerol fermentation; glycerone phosphate from glycerol (oxidative route): step 1/2. In terms of biological role, catalyzes the NAD-dependent oxidation of glycerol to dihydroxyacetone (glycerone). Allows microorganisms to utilize glycerol as a source of carbon under anaerobic conditions. This is Glycerol dehydrogenase (gldA) from Escherichia coli O6:H1 (strain CFT073 / ATCC 700928 / UPEC).